We begin with the raw amino-acid sequence, 546 residues long: Chaperonin GroEL (546 aa).

ATP contacts are provided by residues 29–32, 86–90, G413, 476–478, and D492; these read TLGP, DGTTT, and NAA. A disordered region spans residues 521 to 546; it reads RPDESGNDAGAGAQGMDPSMMGGGMM.

It belongs to the chaperonin (HSP60) family. In terms of assembly, forms a cylinder of 14 subunits composed of two heptameric rings stacked back-to-back. Interacts with the co-chaperonin GroES.

It localises to the cytoplasm. The catalysed reaction is ATP + H2O + a folded polypeptide = ADP + phosphate + an unfolded polypeptide.. Together with its co-chaperonin GroES, plays an essential role in assisting protein folding. The GroEL-GroES system forms a nano-cage that allows encapsulation of the non-native substrate proteins and provides a physical environment optimized to promote and accelerate protein folding. This chain is Chaperonin GroEL, found in Tetragenococcus halophilus (Pediococcus halophilus).